The sequence spans 473 residues: Sulfate adenylyltransferase subunit 1 (473 aa).

The tr-type G domain maps to 19 to 238 (KTLLKFLTCG…IKIKNSISSE (220 aa)). The segment at 28 to 35 (GSVDDGKS) is G1. 28 to 35 (GSVDDGKS) contributes to the GTP binding site. Residues 86 to 90 (GITID) are G2. The G3 stretch occupies residues 107-110 (DTPG). GTP-binding positions include 107 to 111 (DTPGH) and 162 to 165 (NKMD). The tract at residues 162 to 165 (NKMD) is G4. Residues 200–202 (SAL) are G5.

Belongs to the TRAFAC class translation factor GTPase superfamily. Classic translation factor GTPase family. CysN/NodQ subfamily. In terms of assembly, heterodimer composed of CysD, the smaller subunit, and CysN.

The catalysed reaction is sulfate + ATP + H(+) = adenosine 5'-phosphosulfate + diphosphate. It functions in the pathway sulfur metabolism; hydrogen sulfide biosynthesis; sulfite from sulfate: step 1/3. In terms of biological role, with CysD forms the ATP sulfurylase (ATPS) that catalyzes the adenylation of sulfate producing adenosine 5'-phosphosulfate (APS) and diphosphate, the first enzymatic step in sulfur assimilation pathway. APS synthesis involves the formation of a high-energy phosphoric-sulfuric acid anhydride bond driven by GTP hydrolysis by CysN coupled to ATP hydrolysis by CysD. This Buchnera aphidicola subsp. Acyrthosiphon pisum (strain Tuc7) protein is Sulfate adenylyltransferase subunit 1.